We begin with the raw amino-acid sequence, 207 residues long: PITH domain-containing protein P35G2.02 (207 aa).

A PITH domain is found at 13–189 (EHPFESGPND…PVVTIYEATP (177 aa)).

It belongs to the PITHD1 family.

It is found in the cytoplasm. It localises to the nucleus. The sequence is that of PITH domain-containing protein P35G2.02 from Schizosaccharomyces pombe (strain 972 / ATCC 24843) (Fission yeast).